A 954-amino-acid chain; its full sequence is E3 ubiquitin-protein ligase arkadia (954 aa).

Residues 50–66 (LCSDTNKQQRDLNSNGT) are compositionally biased toward polar residues. 2 disordered regions span residues 50-175 (LCSD…VSSL) and 193-276 (RKRF…SGGM). 2 stretches are compositionally biased toward low complexity: residues 112-131 (SSFS…GDSD) and 232-251 (SSSS…SSST). An SUMO interaction motif 1 (SIM) motif is present at residues 280 to 284 (VVVIE). An SUMO interaction motif 2 (SIM) motif is present at residues 305 to 311 (EVEIVTV). 3 disordered regions span residues 318–346 (RTTL…RNRV), 364–452 (TVDE…MPRL), and 485–509 (HFPH…SFRD). Positions 328–337 (WGQNTQSGRT) are enriched in polar residues. The short motif at 360 to 364 (VVDLT) is the SUMO interaction motif 3 (SIM) element. Residues 385–395 (VSTVSSNTSTS) are compositionally biased toward low complexity. Residues 485-496 (HFPHHHHHHHQS) show a composition bias toward basic residues. A ubiquitin binding region spans residues 867 to 869 (YPH). Zn(2+)-binding residues include Cys902 and Cys905. The RING-type; atypical zinc-finger motif lies at 902 to 943 (CTICLSILEEGEDVRRLPCMHLFHQVCVDQWLITNKKCPICR). A ubiquitin binding region spans residues 917 to 921 (RLPCM). 2 residues coordinate Zn(2+): His925 and Cys928.

Belongs to the Arkadia family. Monomer.

It is found in the nucleus. The protein localises to the cytoplasm. It localises to the PML body. It catalyses the reaction S-ubiquitinyl-[E2 ubiquitin-conjugating enzyme]-L-cysteine + [acceptor protein]-L-lysine = [E2 ubiquitin-conjugating enzyme]-L-cysteine + N(6)-ubiquitinyl-[acceptor protein]-L-lysine.. Its pathway is protein modification; protein ubiquitination. Its activity is regulated as follows. Binds free ubiquitin non-covalently via its RING-type zinc finger. Ubiquitin-binding leads to enhance the E3 ubiquitin-protein ligase activity by stabilizing the ubiquitin-conjugating enzyme E2 (donor ubiquitin) in the 'closed' conformation and activating ubiquitin transfer. Functionally, E3 ubiquitin-protein ligase required for mesoderm patterning during embryonic development. Acts as an enhancer of the transcriptional responses of the smad2/smad3 effectors, which are activated downstream of BMP. Acts by mediating ubiquitination and degradation of SMAD inhibitors such as smad7, inducing their proteasomal degradation and thereby enhancing the transcriptional activity of TGF-beta and BMP. Specifically binds polysumoylated chains via SUMO interaction motifs (SIMs) and mediates ubiquitination of sumoylated substrates. The regulation of the BMP-SMAD signaling is however independent of sumoylation and is not dependent of SUMO interaction motifs (SIMs). This is E3 ubiquitin-protein ligase arkadia (rnf111) from Xenopus tropicalis (Western clawed frog).